We begin with the raw amino-acid sequence, 90 residues long: Small ribosomal subunit protein uS15 (90 aa).

Belongs to the universal ribosomal protein uS15 family. Part of the 30S ribosomal subunit. Forms a bridge to the 50S subunit in the 70S ribosome, contacting the 23S rRNA.

In terms of biological role, one of the primary rRNA binding proteins, it binds directly to 16S rRNA where it helps nucleate assembly of the platform of the 30S subunit by binding and bridging several RNA helices of the 16S rRNA. Functionally, forms an intersubunit bridge (bridge B4) with the 23S rRNA of the 50S subunit in the ribosome. This is Small ribosomal subunit protein uS15 from Campylobacter hominis (strain ATCC BAA-381 / DSM 21671 / CCUG 45161 / LMG 19568 / NCTC 13146 / CH001A).